The following is a 518-amino-acid chain: Allene oxide synthase, chloroplastic (518 aa).

Residues 1–33 (MASISTPFPISLHPKTVRSKPLKFRVLTRPIKA) constitute a chloroplast transit peptide. 3 residues coordinate heme b: lysine 133, histidine 164, and lysine 168. (13S)-hydroperoxy-(9Z,11E)-octadecadienoate is bound by residues asparagine 321 and threonine 389. The (13S)-hydroperoxy-(9Z,11E,15Z)-octadecatrienoate site is built by asparagine 321 and threonine 389. The heme b site is built by lysine 469 and cysteine 471.

Belongs to the cytochrome P450 family. It depends on heme b as a cofactor.

Its subcellular location is the plastid. It localises to the chloroplast. It is found in the plastoglobule. The catalysed reaction is (13S)-hydroperoxy-(9Z,11E,15Z)-octadecatrienoate = (9Z,13S,15Z)-12,13-epoxyoctadeca-9,11,15-trienoate + H2O. It catalyses the reaction (13S)-hydroperoxy-(9Z,11E)-octadecadienoate = (9Z,13S)-12,13-epoxyoctadeca-9,11-dienoate + H2O. The protein operates within lipid metabolism; oxylipin biosynthesis. Functionally, cytochrome P450 enzyme involved in the biosynthesis of oxylipin jasmonates, important phytohormones acting as growth regulators and signaling molecules for plant defense. Functions as an allene oxide synthase that converts hydroperoxy fatty acids to unstable allene epoxides. Catalyzes the dehydration of 13-HPOTE ((13S)-hydroperoxy-(9Z,11E,15Z)-octadecatrienoate), as well as 13-HPODE ((13S)-hydroperoxy-(9Z,11E)-octadecadienoate). In Arabidopsis thaliana (Mouse-ear cress), this protein is Allene oxide synthase, chloroplastic (CYP74A).